A 519-amino-acid chain; its full sequence is Glutamate--cysteine ligase (519 aa).

Belongs to the glutamate--cysteine ligase type 1 family. Type 1 subfamily.

The catalysed reaction is L-cysteine + L-glutamate + ATP = gamma-L-glutamyl-L-cysteine + ADP + phosphate + H(+). It functions in the pathway sulfur metabolism; glutathione biosynthesis; glutathione from L-cysteine and L-glutamate: step 1/2. The chain is Glutamate--cysteine ligase from Erwinia tasmaniensis (strain DSM 17950 / CFBP 7177 / CIP 109463 / NCPPB 4357 / Et1/99).